The primary structure comprises 394 residues: Probable purine permease 8 (394 aa).

The next 10 membrane-spanning stretches (helical) occupy residues 45 to 65 (WLRI…STIL), 77 to 97 (TWMG…FRFF), 113 to 133 (FSSF…VSAN), 139 to 159 (VGLL…QLAF), 172 to 192 (FTPF…LLVV), 208 to 228 (VIGI…LSLV), 247 to 267 (LVAY…FASG), 289 to 309 (TLAS…GLIF), 315 to 335 (FSNS…VIVF), and 344 to 364 (IFSI…HYLD). The disordered stretch occupies residues 373 to 394 (TSPVGDPHLLPAEEGHTNIHSV). Over residues 383-394 (PAEEGHTNIHSV) the composition is skewed to basic and acidic residues.

This sequence belongs to the purine permeases (TC 2.A.7.14) family.

Its subcellular location is the membrane. In Arabidopsis thaliana (Mouse-ear cress), this protein is Probable purine permease 8 (PUP8).